We begin with the raw amino-acid sequence, 89 residues long: Small ribosomal subunit protein uS15 (89 aa).

Belongs to the universal ribosomal protein uS15 family. Part of the 30S ribosomal subunit. Forms a bridge to the 50S subunit in the 70S ribosome, contacting the 23S rRNA.

Its function is as follows. One of the primary rRNA binding proteins, it binds directly to 16S rRNA where it helps nucleate assembly of the platform of the 30S subunit by binding and bridging several RNA helices of the 16S rRNA. Functionally, forms an intersubunit bridge (bridge B4) with the 23S rRNA of the 50S subunit in the ribosome. This Nitratidesulfovibrio vulgaris (strain DSM 19637 / Miyazaki F) (Desulfovibrio vulgaris) protein is Small ribosomal subunit protein uS15.